A 333-amino-acid chain; its full sequence is Taste receptor type 2 member 123 (333 aa).

The Extracellular segment spans residues 1 to 13; that stretch reads MFSQKINYSHLFT. N-linked (GlcNAc...) asparagine glycosylation occurs at Asn7. Residues 14–34 form a helical membrane-spanning segment; the sequence is FSITLYVEIVTGILGHGFIAL. Topologically, residues 35 to 60 are cytoplasmic; it reads VNIMDWVKRRRISSVDQILTALALTR. The chain crosses the membrane as a helical span at residues 61 to 81; sequence FIYVLSMLICILLFMLCPHLP. At 82–90 the chain is on the extracellular side; it reads RRSEMLSAM. A helical membrane pass occupies residues 91-111; sequence GIFWVVNSHFSIWLTTCLGVF. Residues 112–134 are Cytoplasmic-facing; it reads YFLKIANFSNSFFLYLKWRVKKV. Residues 135 to 155 form a helical membrane-spanning segment; sequence ILIIILASLIFLTLHILSLGI. At 156 to 205 the chain is on the extracellular side; that stretch reads YDQFSIAAYVGNMSYSLTDLTQFSSTFLFSNSSNVFLITNSSHVFLPINS. Residues Asn167, Asn186, and Asn195 are each glycosylated (N-linked (GlcNAc...) asparagine). The chain crosses the membrane as a helical span at residues 206–226; that stretch reads LFMLIPFTVSLVAFLMLIFSL. The Cytoplasmic segment spans residues 227–253; it reads WKHHKKMQVNAKQPRDVSTMAHIKALQ. The helical transmembrane segment at 254–274 threads the bilayer; sequence TVFSFLLLYAIYLLFLIIGIL. At 275 to 281 the chain is on the extracellular side; that stretch reads NLGLMEK. The helical transmembrane segment at 282–302 threads the bilayer; sequence IVILIFDHISGAVFPISHSFV. Residues 303–333 are Cytoplasmic-facing; sequence LILGNSKLRQASLSVLPCLRCQSKDMDTMGL.

It belongs to the G-protein coupled receptor T2R family. In terms of tissue distribution, expressed in subsets of taste receptor cells of the tongue and palate epithelium and exclusively in gustducin-positive cells. Expressed in the duodenum, antrum and fundus (part of the stomach).

It localises to the membrane. In terms of biological role, gustducin-coupled receptor implicated in the perception of bitter compounds in the oral cavity and the gastrointestinal tract. Signals through PLCB2 and the calcium-regulated cation channel TRPM5. In Mus musculus (Mouse), this protein is Taste receptor type 2 member 123 (Tas2r123).